The sequence spans 198 residues: Leucyl/phenylalanyl-tRNA--protein transferase (198 aa).

Belongs to the L/F-transferase family.

Its subcellular location is the cytoplasm. The catalysed reaction is N-terminal L-lysyl-[protein] + L-leucyl-tRNA(Leu) = N-terminal L-leucyl-L-lysyl-[protein] + tRNA(Leu) + H(+). It catalyses the reaction N-terminal L-arginyl-[protein] + L-leucyl-tRNA(Leu) = N-terminal L-leucyl-L-arginyl-[protein] + tRNA(Leu) + H(+). The enzyme catalyses L-phenylalanyl-tRNA(Phe) + an N-terminal L-alpha-aminoacyl-[protein] = an N-terminal L-phenylalanyl-L-alpha-aminoacyl-[protein] + tRNA(Phe). Functions in the N-end rule pathway of protein degradation where it conjugates Leu, Phe and, less efficiently, Met from aminoacyl-tRNAs to the N-termini of proteins containing an N-terminal arginine or lysine. The protein is Leucyl/phenylalanyl-tRNA--protein transferase of Synechocystis sp. (strain ATCC 27184 / PCC 6803 / Kazusa).